The following is a 300-amino-acid chain: Diphthine methyl ester synthase (300 aa).

S-adenosyl-L-methionine-binding positions include L9, D85, G88, 113–114, L164, L222, and H247; that span reads SV.

It belongs to the diphthine synthase family.

It is found in the cytoplasm. The catalysed reaction is 2-[(3S)-amino-3-carboxypropyl]-L-histidyl-[translation elongation factor 2] + 4 S-adenosyl-L-methionine = diphthine methyl ester-[translation elongation factor 2] + 4 S-adenosyl-L-homocysteine + 3 H(+). The protein operates within protein modification; peptidyl-diphthamide biosynthesis. In terms of biological role, S-adenosyl-L-methionine-dependent methyltransferase that catalyzes four methylations of the modified target histidine residue in translation elongation factor 2 (EF-2), to form an intermediate called diphthine methyl ester. The four successive methylation reactions represent the second step of diphthamide biosynthesis. In Yarrowia lipolytica (strain CLIB 122 / E 150) (Yeast), this protein is Diphthine methyl ester synthase (DPH5).